We begin with the raw amino-acid sequence, 249 residues long: MKIKVINPNTTLAMTKGIEHAAKSAARSDTQIVAVSPKMGPASIESYYDEYLSIPGVIEEIKKGEEEGVDAFVIACWGDPGLHAAREVTDKPVVGIAESSVYLASMLAARFSVVTVLPRIKTMLEDLVDSYGMQKRVLNIRTTPMGVLDFERDPEAGIEMLRQEGKRAVEEDNAEAILLGCAGMAEFADSLEKELGVPVIDGVVAGVKFAETIVDLGKKTSKLKTYKYPEKKEYVGALENFGRNQTTTK.

The protein belongs to the HyuE racemase family. As to quaternary structure, homohexamer.

The enzyme catalyses a D-5-monosubstituted hydantoin = a L-5-monosubstituted hydantoin. It carries out the reaction D-5-[2-(methylsulfanyl)ethyl]hydantoin = L-5-[2-(methysulfanyl)ethyl]hydantoin. The catalysed reaction is D-5-benzylhydantoin = L-5-benzylhydantoin. It catalyses the reaction D-5-isopropylhydantoin = L-5-isopropylhydantoin. The enzyme catalyses D-5-isobutylhydantoin = L-5-isobutylhydantoin. Strongly inhibited by Cu(2+) and Zn(2+). Slightly stimulated by the addition of Mn(2+) or Co(2+), but also by metal-chelating agents such as EDTA or EGTA, indicating that the enzyme is not a metalloenzyme. Its function is as follows. Involved in the asymmetric conversion of racemic 5-substituted hydantoins to the corresponding L-amino acids. Catalyzes the racemization via enolization of D- and L-5-monosubstituted hydantoins. Is able to racemize 5-substituted hydantoins having aromatic or aliphatic substituents such as 5-(2-methylthioethyl)hydantoin, 5-isopropylhydantoin, 5-isobutylhydantoin and 5-benzylhydantoin. This Pseudomonas sp. (strain NS671) protein is Hydantoin racemase.